The following is a 697-amino-acid chain: Sentrin-specific protease (697 aa).

The span at 1–14 (MSRRSDLSDKDSQS) shows a compositional bias: basic and acidic residues. 2 disordered regions span residues 1 to 47 (MSRR…QGLG) and 365 to 387 (SEES…SDSY). The Nuclear localization signal motif lies at 15–19 (RKRHW). The Nuclear localization signal motif lies at 462–467 (KVEKKK). The protease stretch occupies residues 501–664 (IQICKKDLAT…VFSCQFGEWA (164 aa)). Active-site residues include histidine 585, aspartate 602, and cysteine 653.

It belongs to the peptidase C48 family.

The protein resides in the nucleus envelope. Protease that deconjugates smo-1 from targeted proteins and may catalyze the processing of smo-1 to its mature form. In Caenorhabditis elegans, this protein is Sentrin-specific protease (ulp-1).